Here is a 777-residue protein sequence, read N- to C-terminus: Histone-lysine N-methyltransferase set9 (777 aa).

Residues 117–231 (CPFEVNATNR…VGEEITVTYS (115 aa)) form the SET domain. 2 disordered regions span residues 263 to 414 (AVQK…ILSP) and 682 to 718 (RMGS…QGQY). Positions 291–301 (TALQASRTPSV) are enriched in polar residues. The segment covering 323–337 (TSTTDSAAQGAGADG) has biased composition (low complexity). Polar residues-rich tracts occupy residues 371 to 405 (TAPS…QGSE) and 688 to 698 (KQGSSAPSTKG).

This sequence belongs to the class V-like SAM-binding methyltransferase superfamily. Histone-lysine methyltransferase family. Suvar4-20 subfamily.

It is found in the nucleus. It localises to the chromosome. It carries out the reaction L-lysyl(20)-[histone H4] + 3 S-adenosyl-L-methionine = N(6),N(6),N(6)-trimethyl-L-lysyl(20)-[histone H4] + 3 S-adenosyl-L-homocysteine + 3 H(+). Histone methyltransferase that trimethylates 'Lys-20' of histone H4 to form H4K20me3. In Neurospora crassa (strain ATCC 24698 / 74-OR23-1A / CBS 708.71 / DSM 1257 / FGSC 987), this protein is Histone-lysine N-methyltransferase set9 (hlm-1).